We begin with the raw amino-acid sequence, 2039 residues long: Calcium-channel protein CCH1 (2039 aa).

Disordered stretches follow at residues 1-171 and 206-288; these read MQGR…PPRS and PQLK…PQKE. The span at 64-80 shows a compositional bias: basic and acidic residues; that stretch reads STEEKKGDEYNGNDKDS. A glycan (N-linked (GlcNAc...) asparagine) is linked at N98. Composition is skewed to low complexity over residues 122–132 and 147–164; these read SPSTKSAKSSS and FSSY…SPSS. Residues 209 to 226 are compositionally biased toward basic and acidic residues; the sequence is KSEKSRPVSDVGEDRGEG. N-linked (GlcNAc...) asparagine glycans are attached at residues N257 and N269. Over residues 271–281 the composition is skewed to basic residues; the sequence is SRKKPSPKFFH. S284 carries the phosphoserine modification. The chain crosses the membrane as a helical span at residues 346 to 366; it reads YSLLYNTLLTFYAILLAIRTY. N379 carries an N-linked (GlcNAc...) asparagine glycan. Residues 384 to 404 traverse the membrane as a helical segment; that stretch reads FIFILSACFTGNDIAKIIAFG. N-linked (GlcNAc...) asparagine glycosylation occurs at N559. 3 helical membrane-spanning segments follow: residues 563 to 583, 658 to 678, and 691 to 711; these read MLVY…QGSF, IVNS…TDLM, and LFFI…LIAV. 2 N-linked (GlcNAc...) asparagine glycosylation sites follow: N754 and N760. 3 helical membrane passes run 766–786, 809–829, and 841–861; these read LAIY…DIGM, ISIV…PNMW, and FIIS…VLGH. N882 and N900 each carry an N-linked (GlcNAc...) asparagine glycan. Helical transmembrane passes span 904–924 and 942–962; these read FYFF…EGVI and SFLS…LYAL. N968 is a glycosylation site (N-linked (GlcNAc...) asparagine). The chain crosses the membrane as a helical span at residues 978–998; the sequence is FFIIWFLLSNSVILNIFIALI. The N-linked (GlcNAc...) asparagine glycan is linked to N1153. The helical transmembrane segment at 1207–1227 threads the bilayer; the sequence is VFVFIFALATILLIVCSCYVT. N1240 carries an N-linked (GlcNAc...) asparagine glycan. Helical transmembrane passes span 1247–1267 and 1277–1297; these read CAFI…DGFI and PWNF…IAYL. N-linked (GlcNAc...) asparagine glycosylation is present at N1302. Transmembrane regions (helical) follow at residues 1340–1360 and 1408–1428; these read IFEA…WGLS and FASA…VDLL. The N-linked (GlcNAc...) asparagine glycan is linked to N1433. The next 5 helical transmembrane spans lie at 1452–1472, 1529–1549, 1554–1574, 1596–1616, and 1618–1638; these read FLVL…VSFI, NFYY…MLLS, PGNL…VFLI, IRLS…HVPA, and HYWF…FIIP. An N-linked (GlcNAc...) asparagine glycan is attached at N1640. A helical membrane pass occupies residues 1654–1674; that stretch reads LPPILSLTYTWGVLFLVYAIA. Residues N1687 and N1732 are each glycosylated (N-linked (GlcNAc...) asparagine). A helical transmembrane segment spans residues 1748–1768; that stretch reads LMSWNIISMYIFVNMFVSLII. N1770 and N1785 each carry an N-linked (GlcNAc...) asparagine glycan. Residues 1787–1822 enclose the EF-hand domain; that stretch reads SEIKKYIEAWSKFDTDGTGELELSYLPRIMHSFDGP. The segment at 2011–2039 is disordered; the sequence is PRMNQDSTMEPPEEPIDNNDDSANDLIDR. Acidic residues predominate over residues 2021 to 2033; that stretch reads PPEEPIDNNDDSA.

The protein belongs to the calcium channel alpha-1 subunit (TC 1.A.1.11) family. In terms of assembly, interacts with MID1 to form a Ca(2+) influx channel.

The protein localises to the cell membrane. Its function is as follows. Voltage-gated, high-affinity calcium channel that functions together with MID1 to mediate calcium entry into cells. Required during conditions of environmental stress. The chain is Calcium-channel protein CCH1 (CCH1) from Saccharomyces cerevisiae (strain ATCC 204508 / S288c) (Baker's yeast).